We begin with the raw amino-acid sequence, 550 residues long: MFCVQCEQTIRTPAGNGCSYAQGMCGKTAETSDLQDLLIAALQGLSAWAVKAREYGIINHDVDSFAPRAFFSTLTNVNFDSPRIVGYAREAIALREALKAQCLAVEANARVDNPMADLQLVSDDLGELQRQAAEFTPNKDKAAIGENILGLRLLCLYGLKGAAAYMEHAHVLGQYDNDIYAQYHKIMAWLGTWPADMNALLECSMEIGQMNFKVMSILDAGETSKYGHPTPTQVNVKATAGKCILISGHDLKDLYNLLEQTEGTGVNVYTHGEMLPAHGYPELRKFKHLVGNYGSGWQNQQVEFARFPGPIVMTSNCIIDPTVGAYDDRIWTRSIVGWPGVRHLDGEDFSAVIAQAQQMAGFPYSEIPHLITVGFGRQTLLGAADTLIDLVSREKLRHIFLLGGCDGARGERHYFTDFATSVPDDCLILTLACGKYRFNKLEFGDIEGLPRLVDAGQCNDAYSAIILAVTLAEKLGCGVNDLPLSLVLSWFEQKAIVILLTLLSLGVKNIVTGPTAPGFLTPDLLAVLNEKFGLRSITTVEEDMKQLLSA.

4 residues coordinate [2Fe-2S] cluster: Cys-3, Cys-6, Cys-18, and Cys-25. 8 residues coordinate hybrid [4Fe-2O-2S] cluster: His-249, Glu-273, Cys-317, Cys-405, Cys-433, Cys-458, Glu-492, and Lys-494. Cys-405 carries the cysteine persulfide modification.

This sequence belongs to the HCP family. It depends on [2Fe-2S] cluster as a cofactor. The cofactor is hybrid [4Fe-2O-2S] cluster.

The protein resides in the cytoplasm. It catalyses the reaction A + NH4(+) + H2O = hydroxylamine + AH2 + H(+). Catalyzes the reduction of hydroxylamine to form NH(3) and H(2)O. This is Hydroxylamine reductase from Escherichia coli (strain SMS-3-5 / SECEC).